We begin with the raw amino-acid sequence, 259 residues long: Chaplin-C (259 aa).

The signal sequence occupies residues 1-28 (MRQATRKGLMTMAAATGVIAAAGGAAHA). Residues 39 to 79 (SPGVLSGNTVQAPVHVPVNVCGNTVDVVGVLNPAMGNACAN) enclose the Chaplin 1 domain. Over residues 84-112 (ASGGHGGHGGHGGYGDSGGEGGSHGGSHA) the composition is skewed to gly residues. Disordered regions lie at residues 84-129 (ASGG…NHVE) and 154-227 (GNDC…ALAE). The 41-residue stretch at 119-159 (SPGVGSGNHVEVPIDVPVNVCGNSIDVVGALNPTTGNDCGN) folds into the Chaplin 2 domain. Over residues 180–189 (HNPGNPGNPD) the composition is skewed to low complexity. The LPXTG sorting signal signature appears at 225 to 229 (LAETG). Position 228 is a pentaglycyl murein peptidoglycan amidated threonine (Thr228). A propeptide spans 229-259 (GSDLPLGLALPVGAGALLAGTVLYRKARASV) (removed by sortase).

The protein belongs to the chaplin family. Long chaplin subfamily.

The protein resides in the secreted. It localises to the cell wall. One of 8 partially redundant surface-active proteins required for efficient formation of aerial mycelium; the short chaplins assemble into a hydrophobic, amyloidal fibrillar surface layer that envelopes and protects aerial hyphae and spores, presumably anchored to the long chaplins. Chaplins have an overlapping function with the surface-active SapB peptide; chaplins are essential on minimal medium while on rich medium both chaplins and SapB are required for efficient aerial hyphae formation. A minimal chaplin strain capable of forming aerial mycelium/hyphae on minimal medium contains ChpC, ChpE and ChpH. The strain also has restored rodlet formation on the hyphae surface. The long chaplins (ChpA, ChpB, ChpC) are not absolutely necessary for short chaplin localization or rodlet formation, but probably play a role in initiating aerial hyphae development. Chaplins are also involved in cell attachment to a hydrophobic surface. The chain is Chaplin-C from Streptomyces coelicolor (strain ATCC BAA-471 / A3(2) / M145).